Here is a 311-residue protein sequence, read N- to C-terminus: HTH-type transcriptional regulator DsdC (311 aa).

Residues 15 to 72 (WQLSKMHTFEVAARHQSFALAAEELSLSPSAVSHRINQLEEELGIQLFVRSHRKVELT) enclose the HTH lysR-type domain. A DNA-binding region (H-T-H motif) is located at residues 32 to 51 (FALAAEELSLSPSAVSHRIN).

It belongs to the LysR transcriptional regulatory family.

In terms of biological role, regulates the expression of the dsdX-dsdA operon. The chain is HTH-type transcriptional regulator DsdC from Escherichia coli (strain K12).